The sequence spans 208 residues: Translation initiation factor 2 subunit beta (208 aa).

Positions 144–202 (GIEEGKEYTVEISEVGSSGEGRASFRGFTIFVPGTKKGETVKVKIKKIKNDVAIAEVVS) constitute a TRAM domain.

This sequence belongs to the eIF-2-beta/eIF-5 family. As to quaternary structure, heterotrimer composed of an alpha, a beta and a gamma chain.

In terms of biological role, eIF-2 functions in the early steps of protein synthesis by forming a ternary complex with GTP and initiator tRNA. The polypeptide is Translation initiation factor 2 subunit beta (eif2b) (Thermoplasma volcanium (strain ATCC 51530 / DSM 4299 / JCM 9571 / NBRC 15438 / GSS1)).